The sequence spans 316 residues: MSSQKQLEGMIFDVQSFSVHDGPGCRTTVFLNGCPLSCKWCANPESWTVRPHMMFSELSCQYENGCTVCHGKCKNGALSFNLDNKPVIDWNICKDCESFECVNSCYYNAFKLCAKPYTVDELVQVIKRDSNNWRSNGGVTFSGGEPLLQHEFLHEVLLKCHEVNIHTAIETSACVSNEVFNKIFNDIDFAFIDIKHMDREKHKEQTGVYNDLILENISNLANSDWNGRLVLRVPVISGFNDSDENISDIISFMHKNNLVEINLLPFHRLGESKWTQLGKEYEYSDKGDVDEGHLEELQDIFLDNGIACYVGHETAF.

The Radical SAM core domain occupies His-20 to Ala-307. [4Fe-4S] cluster is bound by residues Cys-34, Cys-38, Cys-41, Cys-60, Cys-66, Cys-69, and Cys-105. Trp-40–Ala-42 contributes to the S-adenosyl-L-methionine binding site. In terms of domain architecture, 4Fe-4S ferredoxin-type spans Asn-84–Lys-115. Residues Gly-144, Asp-193–Lys-195, and His-267 contribute to the S-adenosyl-L-methionine site.

The protein belongs to the organic radical-activating enzymes family. In terms of assembly, monomer. The cofactor is [4Fe-4S] cluster.

The enzyme catalyses glycyl-[protein] + reduced [flavodoxin] + S-adenosyl-L-methionine = glycin-2-yl radical-[protein] + semiquinone [flavodoxin] + 5'-deoxyadenosine + L-methionine + H(+). In terms of biological role, catalyzes activation of 4-hydroxyphenylacetate decarboxylase under anaerobic conditions by generation of an organic free radical on a glycine residue, via a homolytic cleavage of S-adenosyl-L-methionine (SAM). The chain is 4-hydroxyphenylacetate decarboxylase activating enzyme from Clostridioides difficile (strain 630) (Peptoclostridium difficile).